A 439-amino-acid chain; its full sequence is Probable serine/threonine-protein kinase WNK6 (439 aa).

The segment at 1–30 (MMPPKPAAEDVADEQPEPPDEDPDVAEADP) is disordered. Residues 10–27 (DVADEQPEPPDEDPDVAE) are compositionally biased toward acidic residues. Residues 35–293 (LRYREIIGSG…ASELLKSPFL (259 aa)) enclose the Protein kinase domain. ATP is bound by residues 116 to 119 (TELF) and Lys166. The active-site Proton acceptor is Asp183.

It belongs to the protein kinase superfamily. Ser/Thr protein kinase family. WNK subfamily.

It carries out the reaction L-seryl-[protein] + ATP = O-phospho-L-seryl-[protein] + ADP + H(+). The enzyme catalyses L-threonyl-[protein] + ATP = O-phospho-L-threonyl-[protein] + ADP + H(+). This chain is Probable serine/threonine-protein kinase WNK6 (WNK6), found in Oryza sativa subsp. japonica (Rice).